Reading from the N-terminus, the 865-residue chain is cGMP-specific 3',5'-cyclic phosphodiesterase (865 aa).

Residues Cys-69 to Ala-83 are compositionally biased toward low complexity. Residues Cys-69–Ser-92 form a disordered region. Ser-92 carries the post-translational modification Phosphoserine. GAF domains follow at residues Asp-154–Leu-304 and Ser-336–Ile-493. Residues Glu-526–Gln-850 form the PDEase domain. His-603 serves as the catalytic Proton donor. Residues His-607, His-643, Asp-644, and Asp-754 each contribute to the Zn(2+) site. Residue Asp-644 coordinates Mg(2+). Residue Gln-807 participates in 3',5'-cyclic GMP binding.

This sequence belongs to the cyclic nucleotide phosphodiesterase family. Zn(2+) is required as a cofactor. Requires Mg(2+) as cofactor. In terms of processing, phosphorylation is regulated by binding of cGMP to the two allosteric sites. Phosphorylation by PRKG1 leads to its activation. In terms of tissue distribution, isoform PDE5A1 and isoform PDE5A2 are highly expressed in the cerebellum, hippocampus, retina, lung, heart, spleen, and thoracic artery. Isoform PDE5A1, but not isoform PDE5A2, is also abundantly expressed in the pylorus.

The protein localises to the cytoplasm. It localises to the cytosol. It catalyses the reaction 3',5'-cyclic GMP + H2O = GMP + H(+). It functions in the pathway purine metabolism; 3',5'-cyclic GMP degradation; GMP from 3',5'-cyclic GMP: step 1/1. Its activity is regulated as follows. Inhibited by zaprinast. Functionally, plays a role in signal transduction by regulating the intracellular concentration of cyclic nucleotides. This phosphodiesterase catalyzes the specific hydrolysis of cGMP to 5'-GMP. Specifically regulates nitric-oxide-generated cGMP. The polypeptide is cGMP-specific 3',5'-cyclic phosphodiesterase (PDE5A) (Canis lupus familiaris (Dog)).